The chain runs to 374 residues: 2-aminoethylphosphonate--pyruvate transaminase 1 (374 aa).

Lys-195 bears the N6-(pyridoxal phosphate)lysine mark.

Belongs to the class-V pyridoxal-phosphate-dependent aminotransferase family. PhnW subfamily. In terms of assembly, homodimer. Pyridoxal 5'-phosphate serves as cofactor.

It carries out the reaction (2-aminoethyl)phosphonate + pyruvate = phosphonoacetaldehyde + L-alanine. In terms of biological role, involved in phosphonate degradation. In Polaromonas sp. (strain JS666 / ATCC BAA-500), this protein is 2-aminoethylphosphonate--pyruvate transaminase 1.